The primary structure comprises 654 residues: Polyvinylalcohol dehydrogenase (654 aa).

The signal sequence occupies residues 1-32 (MGSHAWGGAVFSAATLIAFGSVVHASGTVAET). The Cytochrome c domain maps to 42 to 159 (ADQLDGETLY…AANQWNGWST (118 aa)). Residues Cys-55, Cys-58, and His-59 each contribute to the heme c site.

Belongs to the bacterial PQQ dehydrogenase family. In terms of assembly, monomer. Pyrroloquinoline quinone is required as a cofactor.

The protein resides in the periplasm. The enzyme catalyses a polyvinyl alcohol + 2n Fe(III)-[cytochrome c] = an oxidized polyvinyl alcohol + 2n Fe(II)-[cytochrome c] + 2n H(+). In terms of biological role, catalyzes the oxidation of polyvinyl alcohol (PVA) in the polyvinyl alcohol degradation pathway. The sequence is that of Polyvinylalcohol dehydrogenase (pvadh) from Sphingopyxis sp. (strain 113P3).